We begin with the raw amino-acid sequence, 304 residues long: Serine protease 30 (304 aa).

An N-terminal signal peptide occupies residues 1–21; sequence MESWARCIFLLLLQILTGGRG. Positions 22–30 are cleaved as a propeptide — activation peptide; the sequence is DILHSGAGK. The Peptidase S1 domain occupies 31 to 271; the sequence is IVGGQDAPEG…YVDWIQRTLA (241 aa). A disulfide bridge connects residues C57 and C73. H72 (charge relay system) is an active-site residue. N-linked (GlcNAc...) asparagine glycosylation occurs at N79. The active-site Charge relay system is the D122. Cystine bridges form between C155-C229, C185-C208, and C219-C247. Residue S223 is the Charge relay system of the active site. Residues N232 and N273 are each glycosylated (N-linked (GlcNAc...) asparagine). S275 is lipidated: GPI-anchor amidated serine. A propeptide spans 276-304 (removed in mature form); that stretch reads DAYGCRSRASGAYPALLLVLLAFALPESL.

This sequence belongs to the peptidase S1 family. Expressed predominantly in kidney, small intestine and stomach and moderately in thymus, lung, spleen, testis and skin. In the kidney, expressed mainly in collecting duct of renal medulla and cortex.

The protein localises to the cell membrane. With respect to regulation, inhibited by aprotinin, leupeptin, benzamidine and soybean trypsin inhibitor. Partially inhibited by PMSF and DFP. Its function is as follows. Selectively cleaves synthetic peptide substrates of trypsin. Activates the epithelial sodium channel ENaC. This chain is Serine protease 30 (Prss30), found in Rattus norvegicus (Rat).